The chain runs to 315 residues: Histone-lysine N-methyltransferase SETMAR (315 aa).

One can recognise a Pre-SET domain in the interval 74-137 (PGCACIKTPC…HCRNRVVQSG (64 aa)). Residues Cys76, Cys78, Cys83, Cys88, Cys90, Cys119, Cys123, Cys125, and Cys129 each coordinate Zn(2+). An SET domain is found at 140–264 (FLLQVFQTEK…PGEELSYDYS (125 aa)). S-adenosyl-L-methionine contacts are provided by residues 150 to 152 (KGW), Tyr193, Arg221, and 224 to 225 (NH). Zn(2+) is bound by residues Cys227, Cys288, Cys290, and Cys295. In terms of domain architecture, Post-SET spans 284 to 300 (PRKPCYCGAQSCATFLP).

It belongs to the class V-like SAM-binding methyltransferase superfamily.

The protein localises to the nucleus. It localises to the chromosome. It carries out the reaction L-lysyl(36)-[histone H3] + 2 S-adenosyl-L-methionine = N(6),N(6)-dimethyl-L-lysyl(36)-[histone H3] + 2 S-adenosyl-L-homocysteine + 2 H(+). In terms of biological role, histone methyltransferase that methylates 'Lys-4' and 'Lys-36' of histone H3, 2 specific tags for epigenetic transcriptional activation. Specifically mediates dimethylation of H3 'Lys-36'. This is Histone-lysine N-methyltransferase SETMAR from Rattus norvegicus (Rat).